The following is a 793-amino-acid chain: E3 UFM1-protein ligase 1 (793 aa).

The tract at residues 2 to 212 is required for E3 UFM1-protein ligase activity; it reads AADWEEIRRL…INNLLNLYGF (211 aa). Disordered regions lie at residues 405-472 and 745-793; these read ALLE…RNKL and GAEK…SVTE. Gly residues predominate over residues 427–439; the sequence is EGGGSVKSGGGGN. Positions 767–781 are enriched in basic and acidic residues; it reads SLQRELHSLSRDIKD.

It belongs to the UFL1 family. Catalytic component of the UFM1 ribosome E3 ligase (UREL) complex. Interacts with E2-like enzyme UFC1.

Its subcellular location is the endoplasmic reticulum membrane. The protein localises to the cytoplasm. It localises to the cytosol. It is found in the nucleus. The protein resides in the chromosome. In terms of biological role, E3 protein ligase that mediates ufmylation, the covalent attachment of the ubiquitin-like modifier UFM1 to lysine residues on target proteins, and which plays a key role in various processes, such as ribosome recycling, response to DNA damage, interferon response or reticulophagy (also called ER-phagy). As part of the UREL complex, plays a key role in ribosome recycling by catalyzing mono-ufmylation of RPL26/uL24 subunit of the 60S ribosome. Ufmylation of RPL26/uL24 occurs on free 60S ribosomes following ribosome dissociation: it weakens the junction between post-termination 60S subunits and SEC61 translocons, promoting release and recycling of the large ribosomal subunit from the endoplasmic reticulum membrane. Ufmylation of RPL26/uL24 and subsequent 60S ribosome recycling either take place after normal termination of translation or after ribosome stalling during cotranslational translocation at the endoplasmic reticulum. Involved in reticulophagy in response to endoplasmic reticulum stress by mediating ufmylation of proteins such as CYB5R3 and RPN1, thereby promoting lysosomal degradation of ufmylated proteins. Ufmylation in response to endoplasmic reticulum stress is essential for processes such as hematopoiesis, blood vessel morphogenesis or inflammatory response. In Danio rerio (Zebrafish), this protein is E3 UFM1-protein ligase 1.